The sequence spans 491 residues: Chromosomal replication initiator protein DnaA (491 aa).

A domain I, interacts with DnaA modulators region spans residues 1-69; it reads MTTWDKCLKK…TIQECHGNDL (69 aa). Residues 69-154 are domain II; the sequence is LIIEYSNKKF…KEDEEYSFGL (86 aa). The interval 155 to 371 is domain III, AAA+ region; that stretch reads PLKEKYVFDS…GALNRVLTTS (217 aa). Residues G199, G201, K202, and T203 each coordinate ATP. The interval 372 to 491 is domain IV, binds dsDNA; it reads KFNHKDPTIE…YELLLDKISR (120 aa).

It belongs to the DnaA family. As to quaternary structure, oligomerizes as a right-handed, spiral filament on DNA at oriC.

Its subcellular location is the cytoplasm. Plays an essential role in the initiation and regulation of chromosomal replication. ATP-DnaA binds to the origin of replication (oriC) to initiate formation of the DNA replication initiation complex once per cell cycle. Binds the DnaA box (a 9 base pair repeat at the origin) and separates the double-stranded (ds)DNA. Forms a right-handed helical filament on oriC DNA; dsDNA binds to the exterior of the filament while single-stranded (ss)DNA is stabiized in the filament's interior. The ATP-DnaA-oriC complex binds and stabilizes one strand of the AT-rich DNA unwinding element (DUE), permitting loading of DNA polymerase. After initiation quickly degrades to an ADP-DnaA complex that is not apt for DNA replication. Binds acidic phospholipids. This Francisella tularensis subsp. novicida (strain U112) protein is Chromosomal replication initiator protein DnaA.